Here is a 234-residue protein sequence, read N- to C-terminus: Phosphoribosylaminoimidazole-succinocarboxamide synthase (234 aa).

Belongs to the SAICAR synthetase family.

It carries out the reaction 5-amino-1-(5-phospho-D-ribosyl)imidazole-4-carboxylate + L-aspartate + ATP = (2S)-2-[5-amino-1-(5-phospho-beta-D-ribosyl)imidazole-4-carboxamido]succinate + ADP + phosphate + 2 H(+). It participates in purine metabolism; IMP biosynthesis via de novo pathway; 5-amino-1-(5-phospho-D-ribosyl)imidazole-4-carboxamide from 5-amino-1-(5-phospho-D-ribosyl)imidazole-4-carboxylate: step 1/2. The protein is Phosphoribosylaminoimidazole-succinocarboxamide synthase of Clostridium botulinum (strain Okra / Type B1).